A 418-amino-acid polypeptide reads, in one-letter code: MPSSVSWGILLLAGLCCLVPVSLAEDPQGDAAQKTDTSHHDQDHPTFNKITPNLAEFAFSLYRQLAHQSNSTNIFFSPVSIATAFAMLSLGTKADTHSEILEGLHFNLTEIPEAQVHEGFQELLRTLNQPDSQLQLTTGNGLFLNESLKLVDKFLEDVKKLYHSDAFTVNFGDTEEAKKQINDYVEKGTQGKIVDLVKELDRDTVFALVNYIFFKGKWERPFEVKDTKEEDFHVDEVTTVKVPMMRRLGMFNIHYCEKLSSWVLLMKYLGNATAIFFLPDEGKLQHLENELTHDIITKFLENENRRSASLHLPKLSITGTYDLKRVLGQLGITKVFSNGADLSGVTEEAPLKLSKAVHKAVLTIDEKGTEAAGAMFLEAIPMSIPPEVKFNKPFVFLMIEQNTKSPLFVGKVVNPTQK.

An N-terminal signal peptide occupies residues 1–24 (MPSSVSWGILLLAGLCCLVPVSLA). Position 38 is a phosphoserine (S38). N-linked (GlcNAc...) asparagine glycans are attached at residues N70, N107, and N271. Residues 373 to 392 (GAMFLEAIPMSIPPEVKFNK) are RCL. S383 bears the Phosphoserine mark.

This sequence belongs to the serpin family. Interacts with CELA2A. Interacts with ERGIC3 and LMAN1/ERGIC53. Interacts with PRSS1/Trypsin. In terms of tissue distribution, plasma.

Its subcellular location is the secreted. Inhibitor of serine proteases. Its primary target is elastase, but it also has a moderate affinity for plasmin and thrombin. Inhibits trypsin, chymotrypsin and plasminogen activator. The protein is Alpha-1-antitrypsin (SERPINA1) of Pongo abelii (Sumatran orangutan).